The primary structure comprises 279 residues: 2-dehydro-3-deoxyphosphooctonate aldolase (279 aa).

This sequence belongs to the KdsA family.

Its subcellular location is the cytoplasm. The catalysed reaction is D-arabinose 5-phosphate + phosphoenolpyruvate + H2O = 3-deoxy-alpha-D-manno-2-octulosonate-8-phosphate + phosphate. The protein operates within carbohydrate biosynthesis; 3-deoxy-D-manno-octulosonate biosynthesis; 3-deoxy-D-manno-octulosonate from D-ribulose 5-phosphate: step 2/3. It functions in the pathway bacterial outer membrane biogenesis; lipopolysaccharide biosynthesis. The polypeptide is 2-dehydro-3-deoxyphosphooctonate aldolase (Aromatoleum aromaticum (strain DSM 19018 / LMG 30748 / EbN1) (Azoarcus sp. (strain EbN1))).